The following is a 477-amino-acid chain: Ribulose bisphosphate carboxylase large chain (477 aa).

Residues 1–2 constitute a propeptide that is removed on maturation; the sequence is MS. Position 3 is an N-acetylproline (proline 3). Residue lysine 14 is modified to N6,N6,N6-trimethyllysine. Residues asparagine 123 and threonine 173 each coordinate substrate. The Proton acceptor role is filled by lysine 175. Lysine 177 contributes to the substrate binding site. Mg(2+) is bound by residues lysine 201, aspartate 203, and glutamate 204. Position 201 is an N6-carboxylysine (lysine 201). Histidine 294 (proton acceptor) is an active-site residue. 3 residues coordinate substrate: arginine 295, histidine 327, and serine 379.

This sequence belongs to the RuBisCO large chain family. Type I subfamily. As to quaternary structure, heterohexadecamer of 8 large chains and 8 small chains; disulfide-linked. The disulfide link is formed within the large subunit homodimers. Requires Mg(2+) as cofactor. In terms of processing, the disulfide bond which can form in the large chain dimeric partners within the hexadecamer appears to be associated with oxidative stress and protein turnover.

Its subcellular location is the plastid. It localises to the chloroplast. The catalysed reaction is 2 (2R)-3-phosphoglycerate + 2 H(+) = D-ribulose 1,5-bisphosphate + CO2 + H2O. It catalyses the reaction D-ribulose 1,5-bisphosphate + O2 = 2-phosphoglycolate + (2R)-3-phosphoglycerate + 2 H(+). RuBisCO catalyzes two reactions: the carboxylation of D-ribulose 1,5-bisphosphate, the primary event in carbon dioxide fixation, as well as the oxidative fragmentation of the pentose substrate in the photorespiration process. Both reactions occur simultaneously and in competition at the same active site. This Nicotiana sylvestris (Wood tobacco) protein is Ribulose bisphosphate carboxylase large chain.